We begin with the raw amino-acid sequence, 241 residues long: LexA repressor (241 aa).

Positions 26–46 form a DNA-binding region, H-T-H motif; sequence FDEMKTALDLRSKSGIHRLIT. Catalysis depends on for autocatalytic cleavage activity residues Ser-162 and Lys-200.

This sequence belongs to the peptidase S24 family. Homodimer.

It carries out the reaction Hydrolysis of Ala-|-Gly bond in repressor LexA.. Functionally, represses a number of genes involved in the response to DNA damage (SOS response), including recA and lexA. In the presence of single-stranded DNA, RecA interacts with LexA causing an autocatalytic cleavage which disrupts the DNA-binding part of LexA, leading to derepression of the SOS regulon and eventually DNA repair. The protein is LexA repressor of Ruegeria sp. (strain TM1040) (Silicibacter sp.).